The primary structure comprises 148 residues: MSDSVELYTDGACKGNPGPGGWGVLLIYKGVEKELWGGERETTNNRMELMAAIQGLMALKRECEVVLTTDSQYVMKGINEWMVNWKKRGWKTAAKEPVKNADLWQQLDEQVNRHKVTWKWVRGHIGHPGNERADQLANRGVDEVRAKR.

Residues 1 to 142 (MSDSVELYTD…ADQLANRGVD (142 aa)) enclose the RNase H type-1 domain. Mg(2+) contacts are provided by Asp10, Glu48, Asp70, and Asp134. Residues 129–148 (GNERADQLANRGVDEVRAKR) are disordered.

It belongs to the RNase H family. In terms of assembly, monomer. Mg(2+) serves as cofactor.

The protein localises to the cytoplasm. The catalysed reaction is Endonucleolytic cleavage to 5'-phosphomonoester.. Functionally, endonuclease that specifically degrades the RNA of RNA-DNA hybrids. This is Ribonuclease H from Pseudomonas putida (strain W619).